The following is a 216-amino-acid chain: Ras-related protein Rab-11A (216 aa).

At G2 the chain carries N-acetylglycine. GTP is bound by residues S20, G21, V22, G23, K24, S25, N26, N37, L38, S40, S42, and T43. S25 lines the Mg(2+) pocket. A Switch 1 motif is present at residues 36–47; that stretch reads FNLESKSTIGVE. 2 residues coordinate Mg(2+): T43 and D66. A Switch 2 motif is present at residues 67–86; that stretch reads TAGQERYRAITSAYYRGAVG. Residues G69, N124, K125, D127, A155, and L156 each coordinate GTP. Positions 183-208 are disordered; that stretch reads DRRENDMSPSNNVVPIHVPPTTENKP. S-geranylgeranyl cysteine attachment occurs at residues C212 and C213. C213 carries the post-translational modification Cysteine methyl ester. Residues 214–216 constitute a propeptide, removed in mature form; it reads QNI.

The protein belongs to the small GTPase superfamily. Rab family. Requires Mg(2+) as cofactor.

It is found in the cell membrane. The protein resides in the endosome membrane. Its subcellular location is the recycling endosome membrane. The protein localises to the cleavage furrow. It localises to the cytoplasmic vesicle. It is found in the phagosome. The protein resides in the cytoplasmic vesicle membrane. Its subcellular location is the golgi apparatus. The protein localises to the trans-Golgi network. The enzyme catalyses GTP + H2O = GDP + phosphate + H(+). Regulated by guanine nucleotide exchange factors (GEFs) which promote the exchange of bound GDP for free GTP. Regulated by GTPase activating proteins (GAPs) which increase the GTP hydrolysis activity. Inhibited by GDP dissociation inhibitors (GDIs) which prevent Rab-GDP dissociation. Its function is as follows. The small GTPases Rab are key regulators of intracellular membrane trafficking, from the formation of transport vesicles to their fusion with membranes. Rabs cycle between an inactive GDP-bound form and an active GTP-bound form that is able to recruit to membranes different set of downstream effectors directly responsible for vesicle formation, movement, tethering and fusion. The small Rab GTPase RAB11A regulates endocytic recycling. May also be involved in the regulation of preciliary trafficking and neosynthesized protein export. The chain is Ras-related protein Rab-11A (RAB11A) from Gallus gallus (Chicken).